A 411-amino-acid chain; its full sequence is MWIQQLLGLSSMSIRWPGRPLGSHAWILIAMFQLAVDLPACEALGPGPEFWLLPRSPPRPPRLWSFRSGQPARVPAPVWSPRPPRVERIHGQMQMPRARRAHRPRDQAAALVPKAGLAKPPAAAKSSPSLASSSSSSSSAVAGGAPEQQALLRRGKRHLQGDGLSSFDSRGSRPTTETEFIAWGPTGDEEALESNTFPGVYGPTTVSILQTRKTTVAATTTTTTTATPMTLQTKGFTESLDPRRRIPGGVSTTEPSTSPSNNGEVTQPPRILGEASGLAVHQIITITVSLIMVIAALITTLVLKNCCAQSGNTRRNSHQRKTNQQEESCQNLTDFPSARVPSSLDIFTAYNETLQCSHECVRASVPVYTDETLHSTTGEYKSTFNGNRPSSSDRHLIPVAFVSEKWFEISC.

The signal sequence occupies residues 1-43 (MWIQQLLGLSSMSIRWPGRPLGSHAWILIAMFQLAVDLPACEA). The Extracellular segment spans residues 44-282 (LGPGPEFWLL…GEASGLAVHQ (239 aa)). 3 disordered regions span residues 89 to 108 (IHGQ…RDQA), 115 to 197 (AGLA…SNTF), and 239 to 268 (SLDP…VTQP). Low complexity predominate over residues 115 to 146 (AGLAKPPAAAKSSPSLASSSSSSSSAVAGGAP). The segment covering 166 to 178 (SFDSRGSRPTTET) has biased composition (polar residues). The segment covering 247–263 (PGGVSTTEPSTSPSNNG) has biased composition (low complexity). The chain crosses the membrane as a helical span at residues 283-303 (IITITVSLIMVIAALITTLVL). Residues 303–411 (LKNCCAQSGN…VSEKWFEISC (109 aa)) are targeting signals. At 304 to 411 (KNCCAQSGNT…VSEKWFEISC (108 aa)) the chain is on the cytoplasmic side. The tract at residues 311–330 (GNTRRNSHQRKTNQQEESCQ) is disordered.

As to quaternary structure, forms a complex with CDH1 and CTNNB1; interacts directly with CTNNB1. Interacts with AP1M2. Interacts with isoform 2 of BSG/CD147. Post-translationally, thr-237 and Ser-239 may be phosphorylated; however as this position is probably extracellular, the in vivo relevance is not proven. Expressed in uterus and pancreas (at protein level).

It localises to the basolateral cell membrane. The protein localises to the apical cell membrane. Its subcellular location is the cell junction. The protein resides in the adherens junction. Functionally, plays a role in cell adhesion and cell migration. This Homo sapiens (Human) protein is Adherens junction-associated protein 1 (AJAP1).